A 443-amino-acid polypeptide reads, in one-letter code: Transcriptional adapter 2-alpha (443 aa).

Ser-6 carries the phosphoserine modification. The ZZ-type zinc-finger motif lies at 12-69 (SDKPPCRGCSSYLMEPYIKCAECGPPPFFLCLQCFTRGFEYKKHQSDHTYEIMTSDFP). Zn(2+) is bound by residues Cys-17, Cys-20, Cys-31, Cys-34, Cys-42, Cys-45, His-55, and His-59. The region spanning 70-122 (VLDPSWTAQEEMALLEAVMDCGFGNWQDVANQMCTKTKEECEKHYMKHFINNP) is the SANT domain. Glycyl lysine isopeptide (Lys-Gly) (interchain with G-Cter in SUMO2) cross-links involve residues Lys-132 and Lys-138. Residues 347-359 (LSPSVPMTSNSGR) are compositionally biased toward polar residues. A disordered region spans residues 347–372 (LSPSVPMTSNSGRRSAPPLNLTGLPG). Positions 356-443 (NSGRRSAPPL…LIREGYITKA (88 aa)) constitute an SWIRM domain. A DNA-binding region spans residues 426–435 (KTRKIYDFLI).

Interacts with GCN5 and NR3C1. Associated with the P/CAF protein in the PCAF complex. Component of the PCAF complex, at least composed of TADA2L/ADA2, TADA3L/ADA3, TAF5L/PAF65-beta, TAF6L/PAF65-alpha, TAF10/TAFII30, TAF12/TAFII20, TAF9/TAFII31 and TRRAP. Component of the ADA2A-containing complex (ATAC), composed of KAT14, KAT2A, TADA2L, TADA3L, ZZ3, MBIP, WDR5, YEATS2, CCDC101 and DR1. Interacts with CCDC134.

Its subcellular location is the nucleus. It localises to the chromosome. Component of the ATAC complex, a complex with histone acetyltransferase activity on histones H3 and H4. Required for the function of some acidic activation domains, which activate transcription from a distant site. Binds double-stranded DNA. Binds dinucleosomes, probably at the linker region between neighboring nucleosomes. Plays a role in chromatin remodeling. May promote TP53/p53 'Lys-321' acetylation, leading to reduced TP53 stability and transcriptional activity. May also promote XRCC6 acetylation thus facilitating cell apoptosis in response to DNA damage. The chain is Transcriptional adapter 2-alpha (TADA2A) from Bos taurus (Bovine).